An 885-amino-acid chain; its full sequence is Leucine--tRNA ligase (885 aa).

Positions 48–58 match the 'HIGH' region motif; that stretch reads PYPSGKLHMGH. The 'KMSKS' region motif lies at 639 to 643; sequence TMSKS. An ATP-binding site is contributed by lysine 642.

The protein belongs to the class-I aminoacyl-tRNA synthetase family.

The protein resides in the cytoplasm. The enzyme catalyses tRNA(Leu) + L-leucine + ATP = L-leucyl-tRNA(Leu) + AMP + diphosphate. This chain is Leucine--tRNA ligase, found in Bordetella avium (strain 197N).